The following is a 259-amino-acid chain: MSDILKIGKYEFTSRLIVGSGKYPDFQTTRDATLASGAEMITVAVRRVNIMDPNEENLMDYFKDTDVKILPNSAGCTTAEEAITLFRLVREATGIDIIKLEVIGDTAKTLYPDVMETLKACEVLAKEDFTIMAYTNDDPIMAKRLENAGAHAVMPLAAPIGSGLGVQNRYNVVFVKDAVNVPVIVDAGIGTASDAAVAMELGADGVLTNTAIAQAKNPIAMAEAMKHAVIAGRMAYKAGRIPKKPYATASSPLEGLIEF.

The active-site Schiff-base intermediate with DXP is the Lys99. 1-deoxy-D-xylulose 5-phosphate-binding positions include Gly161, 187 to 188 (AG), and 209 to 210 (NT).

The protein belongs to the ThiG family. Homotetramer. Forms heterodimers with either ThiH or ThiS.

It is found in the cytoplasm. It catalyses the reaction [ThiS sulfur-carrier protein]-C-terminal-Gly-aminoethanethioate + 2-iminoacetate + 1-deoxy-D-xylulose 5-phosphate = [ThiS sulfur-carrier protein]-C-terminal Gly-Gly + 2-[(2R,5Z)-2-carboxy-4-methylthiazol-5(2H)-ylidene]ethyl phosphate + 2 H2O + H(+). Its pathway is cofactor biosynthesis; thiamine diphosphate biosynthesis. Its function is as follows. Catalyzes the rearrangement of 1-deoxy-D-xylulose 5-phosphate (DXP) to produce the thiazole phosphate moiety of thiamine. Sulfur is provided by the thiocarboxylate moiety of the carrier protein ThiS. In vitro, sulfur can be provided by H(2)S. In Nautilia profundicola (strain ATCC BAA-1463 / DSM 18972 / AmH), this protein is Thiazole synthase.